Here is a 62-residue protein sequence, read N- to C-terminus: Large ribosomal subunit protein bL28 (62 aa).

It belongs to the bacterial ribosomal protein bL28 family.

This chain is Large ribosomal subunit protein bL28, found in Aliarcobacter butzleri (strain RM4018) (Arcobacter butzleri).